A 375-amino-acid polypeptide reads, in one-letter code: S-(hydroxymethyl)glutathione dehydrogenase (375 aa).

C40 provides a ligand contact to Zn(2+). H41 provides a ligand contact to NAD(+). Zn(2+) is bound by residues H62, E63, C92, C95, C98, C106, and C170. NAD(+) contacts are provided by residues G195 to G200, D219, I293 to V295, and T318 to F320.

This sequence belongs to the zinc-containing alcohol dehydrogenase family. Class-III subfamily. As to quaternary structure, homotetramer. It depends on Zn(2+) as a cofactor.

The catalysed reaction is a primary alcohol + NAD(+) = an aldehyde + NADH + H(+). The enzyme catalyses a secondary alcohol + NAD(+) = a ketone + NADH + H(+). It carries out the reaction S-(hydroxymethyl)glutathione + NADP(+) = S-formylglutathione + NADPH + H(+). It catalyses the reaction S-(hydroxymethyl)glutathione + NAD(+) = S-formylglutathione + NADH + H(+). The catalysed reaction is S-nitrosoglutathione + NADH + H(+) = S-(hydroxysulfenamide)glutathione + NAD(+). Functionally, oxidizes long-chain alcohols and, in the presence of glutathione, is able to oxidize formaldehyde. Also acts as a S-nitroso-glutathione reductase by catalyzing the NADH-dependent reduction of S-nitrosoglutathione, thereby regulating protein S-nitrosylation. The chain is S-(hydroxymethyl)glutathione dehydrogenase (flhA) from Paracoccus denitrificans.